A 215-amino-acid polypeptide reads, in one-letter code: Large ribosomal subunit protein uL1 (215 aa).

This sequence belongs to the universal ribosomal protein uL1 family. Part of the 50S ribosomal subunit.

In terms of biological role, binds directly to 23S rRNA. Probably involved in E site tRNA release. Its function is as follows. Protein L1 is also a translational repressor protein, it controls the translation of its operon by binding to its mRNA. This Archaeoglobus fulgidus (strain ATCC 49558 / DSM 4304 / JCM 9628 / NBRC 100126 / VC-16) protein is Large ribosomal subunit protein uL1.